A 293-amino-acid polypeptide reads, in one-letter code: ELMO domain-containing protein 2 (293 aa).

In terms of domain architecture, ELMO spans 126 to 282; it reads QHEKMLLKLW…KFHERIKGLL (157 aa).

In terms of biological role, acts as a GTPase-activating protein (GAP) toward guanine nucleotide exchange factors like ARL2, ARL3, ARF1 and ARF6, but not for GTPases outside the Arf family. This is ELMO domain-containing protein 2 (Elmod2) from Mus musculus (Mouse).